The sequence spans 267 residues: Membrane-spanning 4-domains subfamily A member 10 (267 aa).

At 1–56 the chain is on the cytoplasmic side; that stretch reads MAGQAPTAVPGSVTGEVSRWQNLGPAQPAQKVAQPQNLVPDGHLEKALEGSDLLQK. A helical membrane pass occupies residues 57 to 77; it reads LGGFHIAIAFAHLAFGGYLIS. Residues 78 to 83 lie on the Extracellular side of the membrane; that stretch reads TVKNLH. A helical membrane pass occupies residues 84-104; the sequence is LVVLKCWYPLWGTVSFLVAGM. The Cytoplasmic segment spans residues 105–118; the sequence is AAMTTVTFPKTSLK. Residues 119 to 139 traverse the membrane as a helical segment; the sequence is VLCVIANVISLFCALAGFFVI. Topologically, residues 140 to 168 are extracellular; that stretch reads AKDLFLEGPFPWPIWRPYPEPTTYIQRLE. Residues 169-189 form a helical membrane-spanning segment; that stretch reads LTLFCFTFLEIFLSGSTAITA. At 190–267 the chain is on the cytoplasmic side; the sequence is YRMKRLQAED…LHTGPRTLRK (78 aa).

Belongs to the MS4A family. Expressed in thymus, kidney, colon, brain and testis. Expressed also by various hematopoietic and lymphoblastoid cell lines.

The protein resides in the membrane. In terms of biological role, may be involved in signal transduction as a component of a multimeric receptor complex. The protein is Membrane-spanning 4-domains subfamily A member 10 (Ms4a10) of Mus musculus (Mouse).